The following is a 427-amino-acid chain: Phosphatidate cytidylyltransferase, mitochondrial (427 aa).

Residues 94–106 are compositionally biased toward polar residues; that stretch reads YNRNGDGSTSTEN. Residues 94–113 are disordered; it reads YNRNGDGSTSTENPSKKEEQ.

The protein belongs to the TAM41 family. Mg(2+) serves as cofactor.

It localises to the mitochondrion inner membrane. It carries out the reaction a 1,2-diacyl-sn-glycero-3-phosphate + CTP + H(+) = a CDP-1,2-diacyl-sn-glycerol + diphosphate. It functions in the pathway phospholipid metabolism; CDP-diacylglycerol biosynthesis; CDP-diacylglycerol from sn-glycerol 3-phosphate: step 3/3. Catalyzes the formation of CDP-diacylglycerol (CDP-DAG) from phosphatidic acid (PA) in the mitochondrial inner membrane. Required for the biosynthesis of the dimeric phospholipid cardiolipin, which stabilizes supercomplexes of the mitochondrial respiratory chain in the mitochondrial inner membrane. The polypeptide is Phosphatidate cytidylyltransferase, mitochondrial (Dictyostelium discoideum (Social amoeba)).